The chain runs to 289 residues: ADP-dependent (S)-NAD(P)H-hydrate dehydratase (289 aa).

In terms of domain architecture, YjeF C-terminal spans 9–286; it reads VTAAALRAQP…PEVPGILDRL (278 aa). 2 residues coordinate (6S)-NADPHX: alanine 44 and histidine 160. Residues 197–201 and glycine 226 contribute to the AMP site; that span reads KGADS. Aspartate 227 provides a ligand contact to (6S)-NADPHX.

Belongs to the NnrD/CARKD family. Homotetramer. Requires Mg(2+) as cofactor.

The enzyme catalyses (6S)-NADHX + ADP = AMP + phosphate + NADH + H(+). It catalyses the reaction (6S)-NADPHX + ADP = AMP + phosphate + NADPH + H(+). In terms of biological role, catalyzes the dehydration of the S-form of NAD(P)HX at the expense of ADP, which is converted to AMP. Together with NAD(P)HX epimerase, which catalyzes the epimerization of the S- and R-forms, the enzyme allows the repair of both epimers of NAD(P)HX, a damaged form of NAD(P)H that is a result of enzymatic or heat-dependent hydration. In Xanthomonas campestris pv. campestris (strain ATCC 33913 / DSM 3586 / NCPPB 528 / LMG 568 / P 25), this protein is ADP-dependent (S)-NAD(P)H-hydrate dehydratase.